The following is a 175-amino-acid chain: Trafficking protein particle complex subunit 20 (175 aa).

The protein belongs to the TRAPP small subunits family. Sedlin subfamily. As to quaternary structure, part of the multisubunit TRAPP (transport protein particle) I complex composed of BET3, BET5, TRS20, TRS23, TRS31 and TRS33. Part of the multisubunit TRAPP (transport protein particle) II complex composed of BET3, BET5, TRS20, TRS23, TRS31, TRS33, TRS65, TRS85, TRS120 and TRS130. Part of the multisubunit TRAPP (transport protein particle) III complex composed of BET3, BET5, TRS20, TRS23, TRS31, TRS33 and TRS85.

It is found in the golgi apparatus. It localises to the cis-Golgi network. The protein resides in the endoplasmic reticulum. The protein localises to the preautophagosomal structure. Functionally, component of the TRAPP I, TRAPP II and TRAPP III complexes which act as guanine nucleotide exchange factors (GEF) for YPT1. TRAPP I plays a key role in the late stages of endoplasmic reticulum to Golgi traffic. TRAPP II plays a role in intra-Golgi transport. TRAPP III plays a role in autophagosome formation. The sequence is that of Trafficking protein particle complex subunit 20 (TRS20) from Saccharomyces cerevisiae (strain ATCC 204508 / S288c) (Baker's yeast).